Reading from the N-terminus, the 482-residue chain is F-box/LRR-repeat protein At3g58930 (482 aa).

The region spanning 1-47 is the F-box domain; sequence MDRVSNLPDGVRGHILSFLPAKHIALTSVLSKSWLNLWKLIPILDID. 5 LRR repeats span residues 122-150, 175-200, 222-248, 313-344, and 345-370; these read SYED…KIRN, SDLI…RMAS, GTGC…NYSD, ILYL…GIKS, and EEGR…IIEG.

The protein is F-box/LRR-repeat protein At3g58930 of Arabidopsis thaliana (Mouse-ear cress).